The primary structure comprises 349 residues: UDP-N-acetylenolpyruvoylglucosamine reductase (349 aa).

One can recognise an FAD-binding PCMH-type domain in the interval 25-197; it reads GIAARARFAA…VAVTFRLPKQ (173 aa). Arg173 is an active-site residue. Residue Ser249 is the Proton donor of the active site. Glu345 is a catalytic residue.

Belongs to the MurB family. FAD is required as a cofactor.

It is found in the cytoplasm. The catalysed reaction is UDP-N-acetyl-alpha-D-muramate + NADP(+) = UDP-N-acetyl-3-O-(1-carboxyvinyl)-alpha-D-glucosamine + NADPH + H(+). Its pathway is cell wall biogenesis; peptidoglycan biosynthesis. In terms of biological role, cell wall formation. This is UDP-N-acetylenolpyruvoylglucosamine reductase from Burkholderia cenocepacia (strain HI2424).